The chain runs to 122 residues: Small ribosomal subunit protein uS13 (122 aa).

Residues 93–122 (RLSLPVRGQRTKTNSRTRKGKRKTVAGKKK) are disordered. Positions 101–122 (QRTKTNSRTRKGKRKTVAGKKK) are enriched in basic residues.

Belongs to the universal ribosomal protein uS13 family. Part of the 30S ribosomal subunit. Forms a loose heterodimer with protein S19. Forms two bridges to the 50S subunit in the 70S ribosome.

In terms of biological role, located at the top of the head of the 30S subunit, it contacts several helices of the 16S rRNA. In the 70S ribosome it contacts the 23S rRNA (bridge B1a) and protein L5 of the 50S subunit (bridge B1b), connecting the 2 subunits; these bridges are implicated in subunit movement. Contacts the tRNAs in the A and P-sites. This is Small ribosomal subunit protein uS13 from Chlamydia caviae (strain ATCC VR-813 / DSM 19441 / 03DC25 / GPIC) (Chlamydophila caviae).